Reading from the N-terminus, the 200-residue chain is NADH-quinone oxidoreductase subunit C (200 aa).

Belongs to the complex I 30 kDa subunit family. As to quaternary structure, NDH-1 is composed of 14 different subunits. Subunits NuoB, C, D, E, F, and G constitute the peripheral sector of the complex.

Its subcellular location is the cell inner membrane. It carries out the reaction a quinone + NADH + 5 H(+)(in) = a quinol + NAD(+) + 4 H(+)(out). Its function is as follows. NDH-1 shuttles electrons from NADH, via FMN and iron-sulfur (Fe-S) centers, to quinones in the respiratory chain. The immediate electron acceptor for the enzyme in this species is believed to be ubiquinone. Couples the redox reaction to proton translocation (for every two electrons transferred, four hydrogen ions are translocated across the cytoplasmic membrane), and thus conserves the redox energy in a proton gradient. The polypeptide is NADH-quinone oxidoreductase subunit C (Rhizobium leguminosarum bv. trifolii (strain WSM2304)).